Consider the following 470-residue polypeptide: Retinoic acid receptor RXR-gamma (470 aa).

A modulating region spans residues M1 to I145. NR C4-type zinc fingers lie at residues C146–C166 and C182–C206. Positions C146–M211 form a DNA-binding region, nuclear receptor. The tract at residues K212 to S235 is hinge. The span at Q217–T229 shows a compositional bias: basic and acidic residues. The interval Q217–P242 is disordered. The NR LBD domain occupies S238–P466.

It belongs to the nuclear hormone receptor family. NR2 subfamily. As to quaternary structure, homodimer. Heterodimer; with a rar molecule. Binds DNA preferentially as a rar/rxr heterodimer.

Its subcellular location is the nucleus. Functionally, receptor for retinoic acid. Retinoic acid receptors bind as heterodimers to their target response elements in response to their ligands, all-trans or 9-cis retinoic acid, and regulate gene expression in various biological processes. The rar/rxr heterodimers bind to the retinoic acid response elements (RARE) composed of tandem 5'-AGGTCA-3' sites known as DR1-DR5. The high affinity ligand for rxrs is 9-cis retinoic acid. The sequence is that of Retinoic acid receptor RXR-gamma (rxrg) from Xenopus laevis (African clawed frog).